The following is a 375-amino-acid chain: Chaperone protein DnaJ (375 aa).

One can recognise a J domain in the interval 5–69 (DYYEILGVSK…QKRAAYDQYG (65 aa)). A CR-type zinc finger spans residues 130-208 (GVTKEIRIPT…CHGHGRVEKA (79 aa)). The Zn(2+) site is built by Cys143, Cys146, Cys160, Cys163, Cys182, Cys185, Cys196, and Cys199. CXXCXGXG motif repeat units lie at residues 143–150 (CGVCHGSG), 160–167 (CPTCHGQG), 182–189 (CPHCHGRG), and 196–203 (CNSCHGHG).

It belongs to the DnaJ family. Homodimer. Requires Zn(2+) as cofactor.

The protein resides in the cytoplasm. In terms of biological role, participates actively in the response to hyperosmotic and heat shock by preventing the aggregation of stress-denatured proteins and by disaggregating proteins, also in an autonomous, DnaK-independent fashion. Unfolded proteins bind initially to DnaJ; upon interaction with the DnaJ-bound protein, DnaK hydrolyzes its bound ATP, resulting in the formation of a stable complex. GrpE releases ADP from DnaK; ATP binding to DnaK triggers the release of the substrate protein, thus completing the reaction cycle. Several rounds of ATP-dependent interactions between DnaJ, DnaK and GrpE are required for fully efficient folding. Also involved, together with DnaK and GrpE, in the DNA replication of plasmids through activation of initiation proteins. The protein is Chaperone protein DnaJ of Serratia proteamaculans (strain 568).